The chain runs to 131 residues: MRPQQYGGECGMKKKHVILLILILLPVVFLHIMLATWGLSMSFYVKRLSSPPQNYFEITEEDFREIPELKKIFEDLRKLAPGESRSYELDIDTGNKVHSYLTEKQAGVGECSYTYCFKYGDAYYGAHMGTP.

A helical transmembrane segment spans residues 17–39 (VILLILILLPVVFLHIMLATWGL).

The protein resides in the membrane. This is an uncharacterized protein from Archaeoglobus fulgidus (strain ATCC 49558 / DSM 4304 / JCM 9628 / NBRC 100126 / VC-16).